The chain runs to 410 residues: Histone-lysine N-methyltransferase SUV39H2 (410 aa).

Residues 47–105 form the Chromo domain; the sequence is YEVEYLCDYKVVKDMEYYLVKWKGWPDSTNTWEPLQNLKCPLLLQQFFNDKHNYLSQVK. A Pre-SET domain is found at 189–247; sequence FGCSCTDCFFEKCCPAEAGVLLAYNKNQQIKIPPGTPIYECNSRCQCGPDCPNRIVQKG. Zn(2+) is bound by residues C191, C193, C196, C201, C202, C229, C233, C235, and C239. Positions 250 to 373 constitute an SET domain; it reads YSLCIFRTSN…AGEELTFDYQ (124 aa). Residues 261 to 263, Y304, and 330 to 331 each bind S-adenosyl-L-methionine; these read CGW and NH. Position 333 (C333) interacts with Zn(2+). A phosphoserine mark is found at S381, S384, and S388. The region spanning 394–410 is the Post-SET domain; that stretch reads ARTVCKCGAVTCRGYLN. Zn(2+) contacts are provided by C398, C400, and C405.

It belongs to the class V-like SAM-binding methyltransferase superfamily. Histone-lysine methyltransferase family. Suvar3-9 subfamily. In terms of assembly, interacts with SMAD5. The large PER complex involved in the histone methylation is composed of at least PER2, CBX3, TRIM28, SUV39H1 and/or SUV39H2; CBX3 mediates the formation of the complex. Ubiquitinated by the DCX(DCAF13) E3 ubiquitin ligase complex, leading to its degradation.

The protein localises to the nucleus. It localises to the chromosome. Its subcellular location is the centromere. It catalyses the reaction L-lysyl(9)-[histone H3] + 3 S-adenosyl-L-methionine = N(6),N(6),N(6)-trimethyl-L-lysyl(9)-[histone H3] + 3 S-adenosyl-L-homocysteine + 3 H(+). Its function is as follows. Histone methyltransferase that specifically trimethylates 'Lys-9' of histone H3 using monomethylated H3 'Lys-9' as substrate. H3 'Lys-9' trimethylation represents a specific tag for epigenetic transcriptional repression by recruiting HP1 (CBX1, CBX3 and/or CBX5) proteins to methylated histones. Mainly functions in heterochromatin regions, thereby playing a central role in the establishment of constitutive heterochromatin at pericentric and telomere regions. H3 'Lys-9' trimethylation is also required to direct DNA methylation at pericentric repeats. SUV39H1 is targeted to histone H3 via its interaction with RB1 and is involved in many processes, such as cell cycle regulation, transcriptional repression and regulation of telomere length. May participate in regulation of higher-order chromatin organization during spermatogenesis. Recruited by the large PER complex to the E-box elements of the circadian target genes such as PER2 itself or PER1, contributes to the conversion of local chromatin to a heterochromatin-like repressive state through H3 'Lys-9' trimethylation. The polypeptide is Histone-lysine N-methyltransferase SUV39H2 (SUV39H2) (Bos taurus (Bovine)).